The following is a 282-amino-acid chain: Undecaprenyl-diphosphatase (282 aa).

7 helical membrane-spanning segments follow: residues 40 to 60, 87 to 107, 116 to 136, 153 to 173, 196 to 216, 229 to 249, and 256 to 276; these read GAAF…IYFY, MGWM…LFKT, LYWI…AEWL, IGWK…IPGS, FSFL…LYET, NLAV…AFLI, and STAL…GLIA.

The protein belongs to the UppP family.

It is found in the cell inner membrane. The catalysed reaction is di-trans,octa-cis-undecaprenyl diphosphate + H2O = di-trans,octa-cis-undecaprenyl phosphate + phosphate + H(+). Functionally, catalyzes the dephosphorylation of undecaprenyl diphosphate (UPP). Confers resistance to bacitracin. The protein is Undecaprenyl-diphosphatase of Chlorobium phaeobacteroides (strain BS1).